A 470-amino-acid polypeptide reads, in one-letter code: Siroheme synthase (470 aa).

Residues 1–203 (MEFFPIFLKL…GDEAAARAEM (203 aa)) form a precorrin-2 dehydrogenase /sirohydrochlorin ferrochelatase region. Residues 22–23 (EV) and 43–44 (PE) contribute to the NAD(+) site. Serine 128 bears the Phosphoserine mark. The tract at residues 216–470 (GAVYLVGAGP…ENSAVTIQED (255 aa)) is uroporphyrinogen-III C-methyltransferase. Proline 225 provides a ligand contact to S-adenosyl-L-methionine. Aspartate 248 acts as the Proton acceptor in catalysis. Lysine 270 (proton donor) is an active-site residue. Residues 301 to 303 (GGD), methionine 383, and alanine 412 each bind S-adenosyl-L-methionine.

This sequence in the N-terminal section; belongs to the precorrin-2 dehydrogenase / sirohydrochlorin ferrochelatase family. In the C-terminal section; belongs to the precorrin methyltransferase family.

It carries out the reaction uroporphyrinogen III + 2 S-adenosyl-L-methionine = precorrin-2 + 2 S-adenosyl-L-homocysteine + H(+). The catalysed reaction is precorrin-2 + NAD(+) = sirohydrochlorin + NADH + 2 H(+). It catalyses the reaction siroheme + 2 H(+) = sirohydrochlorin + Fe(2+). Its pathway is cofactor biosynthesis; adenosylcobalamin biosynthesis; precorrin-2 from uroporphyrinogen III: step 1/1. The protein operates within cofactor biosynthesis; adenosylcobalamin biosynthesis; sirohydrochlorin from precorrin-2: step 1/1. It functions in the pathway porphyrin-containing compound metabolism; siroheme biosynthesis; precorrin-2 from uroporphyrinogen III: step 1/1. It participates in porphyrin-containing compound metabolism; siroheme biosynthesis; siroheme from sirohydrochlorin: step 1/1. Its pathway is porphyrin-containing compound metabolism; siroheme biosynthesis; sirohydrochlorin from precorrin-2: step 1/1. Functionally, multifunctional enzyme that catalyzes the SAM-dependent methylations of uroporphyrinogen III at position C-2 and C-7 to form precorrin-2 via precorrin-1. Then it catalyzes the NAD-dependent ring dehydrogenation of precorrin-2 to yield sirohydrochlorin. Finally, it catalyzes the ferrochelation of sirohydrochlorin to yield siroheme. The chain is Siroheme synthase from Chromobacterium violaceum (strain ATCC 12472 / DSM 30191 / JCM 1249 / CCUG 213 / NBRC 12614 / NCIMB 9131 / NCTC 9757 / MK).